The sequence spans 119 residues: Large ribosomal subunit protein uL18 (119 aa).

Belongs to the universal ribosomal protein uL18 family. In terms of assembly, part of the 50S ribosomal subunit; part of the 5S rRNA/L5/L18/L25 subcomplex. Contacts the 5S and 23S rRNAs.

Functionally, this is one of the proteins that bind and probably mediate the attachment of the 5S RNA into the large ribosomal subunit, where it forms part of the central protuberance. In Clostridium botulinum (strain ATCC 19397 / Type A), this protein is Large ribosomal subunit protein uL18.